A 191-amino-acid chain; its full sequence is Polysulfide reductase chain B (191 aa).

3 4Fe-4S ferredoxin-type domains span residues 5–34, 50–83, and 84–113; these read YGMI…PDSV, GTLS…VNED, and GIVS…VDPV. [4Fe-4S] cluster-binding residues include cysteine 14, cysteine 17, cysteine 20, cysteine 24, cysteine 61, cysteine 64, cysteine 69, cysteine 73, cysteine 93, cysteine 96, cysteine 99, cysteine 103, cysteine 120, cysteine 123, cysteine 136, and cysteine 140.

Functional polysulfide reductase is made up of three different (A, B, and C) subunits.

Functionally, component of the phosphorylative electron transport system with polysulfide as the terminal acceptor. This is Polysulfide reductase chain B (psrB) from Wolinella succinogenes (strain ATCC 29543 / DSM 1740 / CCUG 13145 / JCM 31913 / LMG 7466 / NCTC 11488 / FDC 602W) (Vibrio succinogenes).